A 677-amino-acid polypeptide reads, in one-letter code: Methionine--tRNA ligase (677 aa).

The short motif at 15–25 (PYANGSIHLGH) is the 'HIGH' region element. Residues C146, C149, C159, and C162 each coordinate Zn(2+). Positions 333-337 (KMSKS) match the 'KMSKS' region motif. K336 serves as a coordination point for ATP. The 103-residue stretch at 575-677 (DFAKVDLRVA…AGAKPGHQVK (103 aa)) folds into the tRNA-binding domain.

The protein belongs to the class-I aminoacyl-tRNA synthetase family. MetG type 1 subfamily. Homodimer. The cofactor is Zn(2+).

Its subcellular location is the cytoplasm. It carries out the reaction tRNA(Met) + L-methionine + ATP = L-methionyl-tRNA(Met) + AMP + diphosphate. In terms of biological role, is required not only for elongation of protein synthesis but also for the initiation of all mRNA translation through initiator tRNA(fMet) aminoacylation. The polypeptide is Methionine--tRNA ligase (Escherichia coli (strain ATCC 8739 / DSM 1576 / NBRC 3972 / NCIMB 8545 / WDCM 00012 / Crooks)).